The primary structure comprises 498 residues: Probable dipeptidase B (498 aa).

Cys26 is an active-site residue.

This sequence belongs to the peptidase C69 family.

The catalysed reaction is an L-aminoacyl-L-amino acid + H2O = 2 an L-alpha-amino acid. This Streptococcus pyogenes serotype M1 protein is Probable dipeptidase B (pepDB).